The following is a 220-amino-acid chain: Glutathione S-transferase (220 aa).

The region spanning 1–77 (MLKLHGFSVS…YIEQTQSGKA (77 aa)) is the GST N-terminal domain. Glutathione contacts are provided by residues Tyr12, Val49, and 61-62 (ET). The region spanning 82 to 211 (DPFEQAKVRE…ADKEASMPAF (130 aa)) is the GST C-terminal domain.

Belongs to the GST superfamily. In terms of assembly, monomer and homodimer.

It localises to the cytoplasm. It carries out the reaction RX + glutathione = an S-substituted glutathione + a halide anion + H(+). Functionally, conjugation of reduced glutathione to a wide number of exogenous and endogenous hydrophobic electrophiles. This is Glutathione S-transferase from Pseudomonas putida (strain ATCC 700007 / DSM 6899 / JCM 31910 / BCRC 17059 / LMG 24140 / F1).